The primary structure comprises 461 residues: CASP-like protein 4U1 (461 aa).

Positions 1–239 (MASTPRTPAP…RAAETKLPLS (239 aa)) are disordered. Residues 1-314 (MASTPRTPAP…AAVAVGERRE (314 aa)) are Cytoplasmic-facing. Residues 7-69 (TPAPVRSPPP…PLETPPPPSP (63 aa)) are compositionally biased toward pro residues. 2 stretches are compositionally biased toward low complexity: residues 116–126 (LSPMRLAAPRL) and 135–155 (TPTGQNGQEEQEGGAKAAAAG). A compositionally biased stretch (pro residues) spans 193 to 204 (SPSPSPTPPSPL). The span at 205–221 (TPAAAPVVNNNSNNKNN) shows a compositional bias: low complexity. Residues 315 to 335 (LSVTLRLATAVLSLAAFSVIA) traverse the membrane as a helical segment. The Extracellular segment spans residues 336–354 (SARTSGWAGDYYAHHLQYR). The helical transmembrane segment at 355-375 (YAVAVNVIVCAYSIAQSFGEI) threads the bilayer. Residues 376–392 (RRLISPRFIFRSMSSYY) lie on the Cytoplasmic side of the membrane. A helical membrane pass occupies residues 393–413 (CSLFLDQALAYLLMSASSAAA). Residues 414–431 (SRNDLWVSRFGTDAFNRK) are Extracellular-facing. The helical transmembrane segment at 432–452 (ITSALWLSFIAFLMLALNALI) threads the bilayer. Residues 453–461 (STANLFSML) lie on the Cytoplasmic side of the membrane.

This sequence belongs to the Casparian strip membrane proteins (CASP) family. As to quaternary structure, homodimer and heterodimers.

The protein localises to the cell membrane. This is CASP-like protein 4U1 from Sorghum bicolor (Sorghum).